We begin with the raw amino-acid sequence, 498 residues long: DEAD-box ATP-dependent RNA helicase 12 (498 aa).

Residues methionine 1–glutamine 114 are disordered. Positions serine 27 to glutamine 65 are enriched in low complexity. The segment covering glycine 74–asparagine 96 has biased composition (polar residues). The Q motif motif lies at asparagine 124–glutamate 152. A Helicase ATP-binding domain is found at isoleucine 155–isoleucine 325. Alanine 168 to threonine 175 contributes to the ATP binding site. The residue at position 230 (threonine 230) is a Phosphothreonine. The DEAD box signature appears at aspartate 273–aspartate 276. In terms of domain architecture, Helicase C-terminal spans glycine 335–isoleucine 495.

This sequence belongs to the DEAD box helicase family. DDX6/DHH1 subfamily.

It localises to the cytoplasm. It is found in the P-body. It carries out the reaction ATP + H2O = ADP + phosphate + H(+). In terms of biological role, ATP-dependent RNA helicase involved in mRNA turnover, and more specifically in mRNA decapping. In Arabidopsis thaliana (Mouse-ear cress), this protein is DEAD-box ATP-dependent RNA helicase 12 (RH12).